The chain runs to 608 residues: 2',5'-phosphodiesterase 12 (608 aa).

Residues 1 to 16 (MWRLPGRAALRGVRSV) constitute a mitochondrion transit peptide. Positions 91 to 111 (AKKSRKNRAHSSGGAACAATG) are disordered. The span at 100-111 (HSSGGAACAATG) shows a compositional bias: low complexity. Ser216 is modified (phosphoserine). Mg(2+)-binding residues include Glu350, Asp495, and Asn497. The active-site Proton donor/acceptor is Asp495.

Belongs to the CCR4/nocturin family. It depends on Mg(2+) as a cofactor.

The protein localises to the mitochondrion matrix. The enzyme catalyses Exonucleolytic cleavage of poly(A) to 5'-AMP.. Functionally, enzyme that cleaves 2',5'-phosphodiester bond linking adenosines of the 5'-triphosphorylated oligoadenylates, triphosphorylated oligoadenylates referred as 2-5A modulates the 2-5A system. Degrades triphosphorylated 2-5A to produce AMP and ATP. Also cleaves 3',5'-phosphodiester bond of oligoadenylates. Plays a role as a negative regulator of the 2-5A system that is one of the major pathways for antiviral and antitumor functions induced by interferons (IFNs). Suppression of this enzyme increases cellular 2-5A levels and decreases viral replication in cultured small-airway epithelial cells. The polypeptide is 2',5'-phosphodiesterase 12 (Pde12) (Rattus norvegicus (Rat)).